We begin with the raw amino-acid sequence, 176 residues long: Large ribosomal subunit protein uL10 (176 aa).

It belongs to the universal ribosomal protein uL10 family. As to quaternary structure, part of the ribosomal stalk of the 50S ribosomal subunit. The N-terminus interacts with L11 and the large rRNA to form the base of the stalk. The C-terminus forms an elongated spine to which L12 dimers bind in a sequential fashion forming a multimeric L10(L12)X complex.

Functionally, forms part of the ribosomal stalk, playing a central role in the interaction of the ribosome with GTP-bound translation factors. The polypeptide is Large ribosomal subunit protein uL10 (Teredinibacter turnerae (strain ATCC 39867 / T7901)).